The primary structure comprises 314 residues: Melanoma-associated antigen 3 (314 aa).

The segment covering 1 to 20 has biased composition (basic and acidic residues); that stretch reads MPLEQRSQHCKPEEGLEARG. A disordered region spans residues 1-99; the sequence is MPLEQRSQHC…QEEEGPSTFP (99 aa). Low complexity predominate over residues 21 to 44; the sequence is EALGLVGAQAPATEEQEAASSSST. The span at 65 to 87 shows a compositional bias: polar residues; it reads PQGASSLPTTMNYPLWSQSYEDS. The MAGE domain maps to 109-308; that stretch reads LSRKVAELVH…ISYPPLHEWV (200 aa).

Interacts with TRIM28. Post-translationally, ubiquitinated by the DCX(DCAF12) complex specifically recognizes the diglutamate (Glu-Glu) at the C-terminus, leading to its degradation. In terms of tissue distribution, expressed in many tumors of several types, such as melanoma, head and neck squamous cell carcinoma, lung carcinoma and breast carcinoma, but not in normal tissues except for testes and placenta. Never expressed in kidney tumors, Leukemias and lymphomas.

Functionally, activator of ubiquitin ligase activity of RING-type zinc finger-containing E3 ubiquitin-protein ligases that acts as a repressor of autophagy. May enhance ubiquitin ligase activity of TRIM28 and stimulate p53/TP53 ubiquitination by TRIM28. Proposed to act through recruitment and/or stabilization of the Ubl-conjugating enzyme (E2) at the E3:substrate complex. May play a role in embryonal development and tumor transformation or aspects of tumor progression. In vitro promotes cell viability in melanoma cell lines. Antigen recognized on a melanoma by autologous cytolytic T-lymphocytes. The polypeptide is Melanoma-associated antigen 3 (Homo sapiens (Human)).